Here is a 132-residue protein sequence, read N- to C-terminus: Large-conductance mechanosensitive channel (132 aa).

The next 2 helical transmembrane spans lie at 11-31 (FISR…GAFG) and 75-95 (GSFL…FLLV).

It belongs to the MscL family. As to quaternary structure, homopentamer.

Its subcellular location is the cell inner membrane. Channel that opens in response to stretch forces in the membrane lipid bilayer. May participate in the regulation of osmotic pressure changes within the cell. The chain is Large-conductance mechanosensitive channel from Synechococcus sp. (strain JA-3-3Ab) (Cyanobacteria bacterium Yellowstone A-Prime).